Here is a 544-residue protein sequence, read N- to C-terminus: Prolyl 4-hydroxylase subunit alpha-3 (544 aa).

The signal sequence occupies residues 1 to 19 (MGPAARLAALLAVLAFRAG). The stretch at 107–131 (LEASENIRALKDGYERVEQDLPAFE) forms a coiled coil. One copy of the TPR repeat lies at 227-260 (EDALDHLAFAYFQAGNVLCALNLSREFLLYSPDN). The N-linked (GlcNAc...) asparagine glycan is linked to N248. The region spanning 422–529 (YAEYLQVVNY…KWVANKWIHE (108 aa)) is the Fe2OG dioxygenase domain. Residues H440 and D442 each coordinate Fe cation. N482 carries an N-linked (GlcNAc...) asparagine glycan. H510 provides a ligand contact to Fe cation. K520 is a 2-oxoglutarate binding site.

This sequence belongs to the P4HA family. Heterotetramer of two alpha-3 chains and two beta chains (the beta chain is the multi-functional PDI). The cofactor is Fe(2+). L-ascorbate is required as a cofactor. In terms of processing, N-glycosylation plays no role in the catalytic activity.

It localises to the endoplasmic reticulum lumen. It catalyses the reaction L-prolyl-[collagen] + 2-oxoglutarate + O2 = trans-4-hydroxy-L-prolyl-[collagen] + succinate + CO2. Its function is as follows. Catalyzes the post-translational formation of 4-hydroxyproline in -Xaa-Pro-Gly- sequences in collagens and other proteins. This Bos taurus (Bovine) protein is Prolyl 4-hydroxylase subunit alpha-3 (P4HA3).